Here is a 232-residue protein sequence, read N- to C-terminus: MGKIAGLVVAGGGGSRITNSVLPKQYLQVRGKAILQYTVEALFAHPKIECVHLVVNSKCEVHYLPILRNLSGYVVSLSEAGNTRTDSVFSGLKALECLNPSHVLIQDAARPFTTPKVINAVIKSLLEGCEGVVPVVPVQDTIIKREPEGIVTDVNRDELRIVQTPQGFDFCKIFAAYKAHFMCPSKRYTDDGSLALAHGIKVECIPGDSSNLKITHPFDLKFADFLLAQSHR.

This sequence belongs to the IspD/TarI cytidylyltransferase family. IspD subfamily.

It catalyses the reaction 2-C-methyl-D-erythritol 4-phosphate + CTP + H(+) = 4-CDP-2-C-methyl-D-erythritol + diphosphate. It functions in the pathway isoprenoid biosynthesis; isopentenyl diphosphate biosynthesis via DXP pathway; isopentenyl diphosphate from 1-deoxy-D-xylulose 5-phosphate: step 2/6. Functionally, catalyzes the formation of 4-diphosphocytidyl-2-C-methyl-D-erythritol from CTP and 2-C-methyl-D-erythritol 4-phosphate (MEP). This chain is 2-C-methyl-D-erythritol 4-phosphate cytidylyltransferase, found in Neorickettsia sennetsu (strain ATCC VR-367 / Miyayama) (Ehrlichia sennetsu).